The sequence spans 421 residues: Hydrolyase poxO (421 aa).

The active-site Nucleophile is the Ser239.

It belongs to the AB hydrolase superfamily. FUS2 hydrolase family. Homodimer.

It functions in the pathway secondary metabolite biosynthesis. Its function is as follows. Hydrolyase; part of the gene cluster that mediates the biosynthesis of oxaleimides, cytotoxic compounds containing an unusual disubstituted succinimide moiety. The first step of the pathway is provided by the HR-PKS poxF that serves in a new mode of collaborative biosynthesis with the PKS-NRPS poxE, by providing the olefin containing amino acid substrate via the synthesis of an ACP-bound dec-4-enoate. The cytochrome P450 monooxygenase poxM-catalyzed oxidation at the alpha-position creates the enzyme-bound 2-hydroxydec-4-enoyl-ACP thioester, which may be prone to spontaneous hydrolysis to yield 2-hydroxydec-4-enoic acid due to increased electrophilicity of the carbonyl. 2-hydroxydec-4-enoic acid can then be further oxidized by poxM to yield the alpha-ketoacid 2-oxodec-4-enoicacid, which is reductively aminated by the aminotransferase poxL to yield (S,E)-2-aminodec-4-enoic acid. The Hybrid PKS-NRPS synthetase poxE then performs condensation between the octaketide product of its PKS modules and the amino group of (S,E)-2-aminodec-4-enoic acid which is activated and incorporated by the adenylation domain. The resulting aminoacyl product can be cyclized by the Diels-Alderase PoxQ and reductively released by the reductive (R) domain of poxE to yield an aldehyde intermediate. The released aldehyde is then substrate for a Knoevenagel condensation by the hydrolyase poxO followed by an oxidation at the 5-position of the pyrrolidone ring. The presence of the olefin from the amino acid building block allows for migration of the substituted allyl group to occur. This allylic transposition reaction takes place in a conjugate addition, semipinacol-like fashion to yield a succinimide intermediate. Iterative two-electron oxidations of the C7 methyl of the succinimide intermediate to the carboxylic acid can be catalyzed by one of two remaining cytochrome P450 monooxygenasess poxC or poxD to yield oxaleimide A. Subsequent oxidation yields the maleimide scaffold oxaleimide I. Both oxaleimide A and oxaleimide I can undergo oxidative modifications in the decalin ring to yield the series of products oxaleimides B to H. This chain is Hydrolyase poxO, found in Penicillium oxalicum (strain 114-2 / CGMCC 5302) (Penicillium decumbens).